Consider the following 1866-residue polypeptide: Nucleoporin Nup188 (1866 aa).

This sequence belongs to the Nup188 family. Part of the nuclear pore complex (NPC).

The protein localises to the nucleus. It localises to the nuclear pore complex. Component of the nuclear pore complex (NPC), a complex required for the trafficking across the nuclear envelope. Required for proper protein transport into the nucleus. This Drosophila melanogaster (Fruit fly) protein is Nucleoporin Nup188.